Here is a 347-residue protein sequence, read N- to C-terminus: Protein RecA (347 aa).

65 to 72 is an ATP binding site; it reads GPESSGKT. The segment at 328-347 is disordered; sequence SPAQPEAPAAGEKPEQEEEF.

It belongs to the RecA family.

It localises to the cytoplasm. Can catalyze the hydrolysis of ATP in the presence of single-stranded DNA, the ATP-dependent uptake of single-stranded DNA by duplex DNA, and the ATP-dependent hybridization of homologous single-stranded DNAs. It interacts with LexA causing its activation and leading to its autocatalytic cleavage. The polypeptide is Protein RecA (Vibrio parahaemolyticus serotype O3:K6 (strain RIMD 2210633)).